A 62-amino-acid chain; its full sequence is Large ribosomal subunit protein bL33 (62 aa).

This sequence belongs to the bacterial ribosomal protein bL33 family.

The sequence is that of Large ribosomal subunit protein bL33 from Phocaeicola vulgatus (strain ATCC 8482 / DSM 1447 / JCM 5826 / CCUG 4940 / NBRC 14291 / NCTC 11154) (Bacteroides vulgatus).